Reading from the N-terminus, the 514-residue chain is Polygalacturonase (514 aa).

The signal sequence occupies residues 1 to 22; that stretch reads MAMKFIAPMAFVAMQLIIMAAA. The propeptide occupies 23 to 45; the sequence is EDQSAQIMLDSDIEQYLRSNRSL. PbH1 repeat units lie at residues 214-240, 241-262, 264-284, 294-315, and 323-344; these read CEGV…DIFA, SKNF…AIGT, SSNI…SIGS, VSYV…RIKT, and ASHI…LINQ. D255 serves as the catalytic Proton donor. H278 is a catalytic residue. The propeptide occupies 434–514; that stretch reads AKRKESKSHK…CSRHGKIYHP (81 aa). N460 and N472 each carry an N-linked (GlcNAc...) asparagine glycan.

The protein belongs to the glycosyl hydrolase 28 family.

Its subcellular location is the secreted. The protein localises to the plastid. It localises to the amyloplast. The protein resides in the cell wall. It carries out the reaction (1,4-alpha-D-galacturonosyl)n+m + H2O = (1,4-alpha-D-galacturonosyl)n + (1,4-alpha-D-galacturonosyl)m.. This Cryptomeria japonica (Japanese cedar) protein is Polygalacturonase.